The chain runs to 147 residues: 3-dehydroquinate dehydratase (147 aa).

The active-site Proton acceptor is the tyrosine 23. Positions 74, 80, and 87 each coordinate substrate. The active-site Proton donor is the histidine 100. Residues 101–102 (LS) and arginine 111 each bind substrate.

Belongs to the type-II 3-dehydroquinase family. As to quaternary structure, homododecamer.

The enzyme catalyses 3-dehydroquinate = 3-dehydroshikimate + H2O. Its pathway is metabolic intermediate biosynthesis; chorismate biosynthesis; chorismate from D-erythrose 4-phosphate and phosphoenolpyruvate: step 3/7. Its function is as follows. Catalyzes a trans-dehydration via an enolate intermediate. In Clostridium botulinum (strain Kyoto / Type A2), this protein is 3-dehydroquinate dehydratase.